Consider the following 304-residue polypeptide: UDP-N-acetylenolpyruvoylglucosamine reductase (304 aa).

The FAD-binding PCMH-type domain occupies M33 to K212. R176 is an active-site residue. S226 (proton donor) is an active-site residue. E296 is an active-site residue.

This sequence belongs to the MurB family. FAD serves as cofactor.

Its subcellular location is the cytoplasm. It catalyses the reaction UDP-N-acetyl-alpha-D-muramate + NADP(+) = UDP-N-acetyl-3-O-(1-carboxyvinyl)-alpha-D-glucosamine + NADPH + H(+). It functions in the pathway cell wall biogenesis; peptidoglycan biosynthesis. Cell wall formation. The polypeptide is UDP-N-acetylenolpyruvoylglucosamine reductase (Exiguobacterium sibiricum (strain DSM 17290 / CCUG 55495 / CIP 109462 / JCM 13490 / 255-15)).